Here is a 231-residue protein sequence, read N- to C-terminus: MKIGIIGAMQQEVAILKDLIEDVQEVNQAGCTFYSGQIQGVDVVLLQSGIGKVSAALGTALLISQYAPDVVINTGSAGGFDASLNVGDVVISSEVRHHDADVTAFGYEIGQMAGQPAAFKADEKLMTVAEQALAQLPNTHAVRGLICTGDAFVCTAERQQFIRQHFPSVVAVEMEASAIAQTCHQFKVPFVVVRAISDVADKESPLSFEEFLPLAAKSSSAMVLKMVELLK.

The active-site Proton acceptor is E12. Substrate is bound by residues G78, V153, and 174–175 (ME). Residue D198 is the Proton donor of the active site.

Belongs to the PNP/UDP phosphorylase family. MtnN subfamily.

The enzyme catalyses S-adenosyl-L-homocysteine + H2O = S-(5-deoxy-D-ribos-5-yl)-L-homocysteine + adenine. The catalysed reaction is S-methyl-5'-thioadenosine + H2O = 5-(methylsulfanyl)-D-ribose + adenine. It carries out the reaction 5'-deoxyadenosine + H2O = 5-deoxy-D-ribose + adenine. It functions in the pathway amino-acid biosynthesis; L-methionine biosynthesis via salvage pathway; S-methyl-5-thio-alpha-D-ribose 1-phosphate from S-methyl-5'-thioadenosine (hydrolase route): step 1/2. Catalyzes the irreversible cleavage of the glycosidic bond in both 5'-methylthioadenosine (MTA) and S-adenosylhomocysteine (SAH/AdoHcy) to adenine and the corresponding thioribose, 5'-methylthioribose and S-ribosylhomocysteine, respectively. Also cleaves 5'-deoxyadenosine, a toxic by-product of radical S-adenosylmethionine (SAM) enzymes, into 5-deoxyribose and adenine. The sequence is that of 5'-methylthioadenosine/S-adenosylhomocysteine nucleosidase from Vibrio cholerae serotype O1 (strain ATCC 39315 / El Tor Inaba N16961).